Here is a 250-residue protein sequence, read N- to C-terminus: Phosphoribosylaminoimidazole-succinocarboxamide synthase (250 aa).

It belongs to the SAICAR synthetase family.

It catalyses the reaction 5-amino-1-(5-phospho-D-ribosyl)imidazole-4-carboxylate + L-aspartate + ATP = (2S)-2-[5-amino-1-(5-phospho-beta-D-ribosyl)imidazole-4-carboxamido]succinate + ADP + phosphate + 2 H(+). Its pathway is purine metabolism; IMP biosynthesis via de novo pathway; 5-amino-1-(5-phospho-D-ribosyl)imidazole-4-carboxamide from 5-amino-1-(5-phospho-D-ribosyl)imidazole-4-carboxylate: step 1/2. The chain is Phosphoribosylaminoimidazole-succinocarboxamide synthase from Picosynechococcus sp. (strain ATCC 27264 / PCC 7002 / PR-6) (Agmenellum quadruplicatum).